The sequence spans 119 residues: Beta-2-microglobulin (119 aa).

Positions 1-20 are cleaved as a signal peptide; it reads MARFVVVALLVLLSLSGLEA. Residues 25–114 form the Ig-like C1-type domain; that stretch reads PKIQVYSRHP…VTFSTPKTVK (90 aa). Cys-45 and Cys-100 form a disulfide bridge.

The protein belongs to the beta-2-microglobulin family. In terms of assembly, heterodimer of an alpha chain and a beta chain. Beta-2-microglobulin is the beta-chain of major histocompatibility complex class I molecules.

It localises to the secreted. Functionally, component of the class I major histocompatibility complex (MHC). Involved in the presentation of peptide antigens to the immune system. This is Beta-2-microglobulin (B2M) from Callimico goeldii (Goeldi's marmoset).